We begin with the raw amino-acid sequence, 1132 residues long: DNA topoisomerase 2 (1132 aa).

ATP is bound by residues asparagine 68, asparagine 100, 137-139, and 150-157; these read SSN and GKNGLGVK. The interval 327–329 is interaction with DNA; it reads NKP. Position 363 to 365 (363 to 365) interacts with ATP; sequence QNK. Positions 442-577 constitute a Toprim domain; that stretch reads CTLIVCEGLS…NLKDFPFISS (136 aa). 3 residues coordinate Mg(2+): glutamate 448, aspartate 538, and aspartate 540. The region spanning 713–1125 is the Topo IIA-type catalytic domain; sequence LPHLIDGLKE…NEGQMWLKDI (413 aa). Tyrosine 803 functions as the O-(5'-phospho-DNA)-tyrosine intermediate in the catalytic mechanism. Positions 979–988 are interaction with DNA; it reads KLRSYIHTSN.

This sequence belongs to the type II topoisomerase family. Mg(2+) is required as a cofactor. Requires Mn(2+) as cofactor. It depends on Ca(2+) as a cofactor.

The enzyme catalyses ATP-dependent breakage, passage and rejoining of double-stranded DNA.. In terms of biological role, can introduce negative superhelical turns into double-stranded circular DNA. The protein is DNA topoisomerase 2 (TOP2) of Acheta domesticus (House cricket).